The following is a 552-amino-acid chain: CTP synthase (552 aa).

An amidoligase domain region spans residues 1–273 (MSESKKNPET…LTPIARRFNM (273 aa)). Ser-21 serves as a coordination point for CTP. Residue Ser-21 coordinates UTP. Residues 22 to 27 (SLGKGI) and Asp-79 each bind ATP. The Mg(2+) site is built by Asp-79 and Glu-147. Residues 154–156 (DIE), 194–199 (KTKPTQ), and Lys-230 contribute to the CTP site. UTP-binding positions include 194–199 (KTKPTQ) and Lys-230. In terms of domain architecture, Glutamine amidotransferase type-1 spans 298–548 (TIAFVGKYLS…IQKSLELKKV (251 aa)). Gly-359 is a binding site for L-glutamine. Catalysis depends on Cys-386, which acts as the Nucleophile; for glutamine hydrolysis. L-glutamine is bound by residues 387-390 (LGMQ), Glu-410, and Arg-478. Catalysis depends on residues His-521 and Glu-523.

This sequence belongs to the CTP synthase family. Homotetramer.

The enzyme catalyses UTP + L-glutamine + ATP + H2O = CTP + L-glutamate + ADP + phosphate + 2 H(+). It catalyses the reaction L-glutamine + H2O = L-glutamate + NH4(+). The catalysed reaction is UTP + NH4(+) + ATP = CTP + ADP + phosphate + 2 H(+). Its pathway is pyrimidine metabolism; CTP biosynthesis via de novo pathway; CTP from UDP: step 2/2. With respect to regulation, allosterically activated by GTP, when glutamine is the substrate; GTP has no effect on the reaction when ammonia is the substrate. The allosteric effector GTP functions by stabilizing the protein conformation that binds the tetrahedral intermediate(s) formed during glutamine hydrolysis. Inhibited by the product CTP, via allosteric rather than competitive inhibition. Its function is as follows. Catalyzes the ATP-dependent amination of UTP to CTP with either L-glutamine or ammonia as the source of nitrogen. Regulates intracellular CTP levels through interactions with the four ribonucleotide triphosphates. This Wolinella succinogenes (strain ATCC 29543 / DSM 1740 / CCUG 13145 / JCM 31913 / LMG 7466 / NCTC 11488 / FDC 602W) (Vibrio succinogenes) protein is CTP synthase.